Consider the following 121-residue polypeptide: Putative iron-sulfur cluster insertion protein ErpA (121 aa).

Iron-sulfur cluster-binding residues include cysteine 49, cysteine 113, and cysteine 115.

This sequence belongs to the HesB/IscA family. In terms of assembly, homodimer. Requires iron-sulfur cluster as cofactor.

Its function is as follows. Required for insertion of 4Fe-4S clusters. In Nitrosomonas eutropha (strain DSM 101675 / C91 / Nm57), this protein is Putative iron-sulfur cluster insertion protein ErpA.